The chain runs to 301 residues: uncharacterized protein (301 aa).

Disordered stretches follow at residues 56-126 (ESPT…ESDL) and 149-173 (LSTE…DASS). Residues 71-82 (VQKENQKPKDLN) show a composition bias toward basic and acidic residues. A compositionally biased stretch (polar residues) spans 93–102 (KNSSGLVSQI). Low complexity predominate over residues 161–173 (SNTSSSSMSDASS).

This is an uncharacterized protein from Caenorhabditis elegans.